A 252-amino-acid chain; its full sequence is Ditrans,polycis-undecaprenyl-diphosphate synthase ((2E,6E)-farnesyl-diphosphate specific) (252 aa).

D25 is a catalytic residue. Position 25 (D25) interacts with Mg(2+). Residues 26–29, W30, R38, H42, and 70–72 contribute to the substrate site; these read GNGR and SSE. The active-site Proton acceptor is N73. Residues W74, R76, and R193 each coordinate substrate. H198 provides a ligand contact to Mg(2+). 199–201 is a substrate binding site; that stretch reads RIS. A Mg(2+)-binding site is contributed by E212.

The protein belongs to the UPP synthase family. As to quaternary structure, homodimer. Mg(2+) serves as cofactor.

The catalysed reaction is 8 isopentenyl diphosphate + (2E,6E)-farnesyl diphosphate = di-trans,octa-cis-undecaprenyl diphosphate + 8 diphosphate. Functionally, catalyzes the sequential condensation of isopentenyl diphosphate (IPP) with (2E,6E)-farnesyl diphosphate (E,E-FPP) to yield (2Z,6Z,10Z,14Z,18Z,22Z,26Z,30Z,34E,38E)-undecaprenyl diphosphate (di-trans,octa-cis-UPP). UPP is the precursor of glycosyl carrier lipid in the biosynthesis of bacterial cell wall polysaccharide components such as peptidoglycan and lipopolysaccharide. The protein is Ditrans,polycis-undecaprenyl-diphosphate synthase ((2E,6E)-farnesyl-diphosphate specific) of Salmonella paratyphi A (strain ATCC 9150 / SARB42).